Here is a 724-residue protein sequence, read N- to C-terminus: WW domain-containing protein ZK1098.1 (724 aa).

WW domains lie at 78–111 and 123–156; these read PSVESDWSVHTNEKGTPYYHNRVTKQTSWIKPDV and QPQQGQWKEFMSDDGKPYYYNTLTKKTQWVKPDG. FF domains follow at residues 224 to 282, 295 to 349, 353 to 422, 442 to 502, 507 to 562, and 578 to 632; these read KKRQ…WKVQ, IKKS…CIDF, RDKE…HIKQ, QRKV…FVED, YTED…LIEK, and KRRL…YKNG. A disordered region spans residues 626–724; that stretch reads FNHYKNGTSG…KRKRRESEAD (99 aa). The segment covering 630-639 has biased composition (polar residues); that stretch reads KNGTSGTTAG. Positions 645–657 are enriched in basic residues; sequence KKKKKKDKKKKNK. Positions 681-692 are enriched in basic and acidic residues; that stretch reads SKEDRMDDEERG. Residues 693-703 are compositionally biased toward basic residues; it reads KKSKKSRKRSP.

In Caenorhabditis elegans, this protein is WW domain-containing protein ZK1098.1.